We begin with the raw amino-acid sequence, 350 residues long: Dihydroorotate dehydrogenase (quinone) (350 aa).

FMN is bound by residues 59 to 63 (AGLDK) and T83. Substrate is bound at residue K63. Residue 108–112 (NRMGF) participates in substrate binding. 2 residues coordinate FMN: N136 and N169. N169 serves as a coordination point for substrate. S172 functions as the Nucleophile in the catalytic mechanism. Position 174 (N174) interacts with substrate. Residues K214 and T242 each contribute to the FMN site. 243 to 244 (NT) provides a ligand contact to substrate. FMN contacts are provided by residues G265, G294, and 315 to 316 (YS).

Belongs to the dihydroorotate dehydrogenase family. Type 2 subfamily. As to quaternary structure, monomer. It depends on FMN as a cofactor.

The protein localises to the cell membrane. The enzyme catalyses (S)-dihydroorotate + a quinone = orotate + a quinol. The protein operates within pyrimidine metabolism; UMP biosynthesis via de novo pathway; orotate from (S)-dihydroorotate (quinone route): step 1/1. Functionally, catalyzes the conversion of dihydroorotate to orotate with quinone as electron acceptor. This Aromatoleum aromaticum (strain DSM 19018 / LMG 30748 / EbN1) (Azoarcus sp. (strain EbN1)) protein is Dihydroorotate dehydrogenase (quinone).